The chain runs to 273 residues: Transmembrane protein 45A (273 aa).

5 helical membrane passes run 8-27, 55-79, 108-131, 153-171, and 217-236; these read ALPG…KNIL, VVVL…ALIL, IICF…AIFV, LLVF…EFLV, and MFLS…LIGV.

This sequence belongs to the TMEM45 family.

The protein localises to the membrane. In Mus musculus (Mouse), this protein is Transmembrane protein 45A (Tmem45a).